Here is a 21-residue protein sequence, read N- to C-terminus: Tricyclic peptide MS-271 (21 aa).

A cross-link (3-cysteinyl-aspartic acid (Cys-Asp)) is located at residues C1–D9. Disulfide bonds link C1–C13 and C7–C19. W21 is modified (D-tryptophan).

Its function is as follows. Inhibits chicken myosin light chain kinase with an IC(50) of 8 M. Does not inhibit bovine cAMP-dependent protein kinase or rat protein kinase C. Antibacterial activity against the Gram-positive bacteria B.subtilis, E.faecium and S.aureus. No antibacterial activity against the Gram-negative bacteria E.coli, K.pneumoniae, P.aeruginosa, P.vulgaris, S.sonnei and S.typhosa. No antifungal activity against C.albicans. This chain is Tricyclic peptide MS-271, found in Streptomyces sp.